Here is a 389-residue protein sequence, read N- to C-terminus: Glutaryl-CoA dehydrogenase (389 aa).

Substrate contacts are provided by Arg87 and Asn91. FAD-binding positions include 126 to 129 (FGIT), Ser135, and 159 to 161 (WIS). Residue Ser135 participates in substrate binding. Position 181 (Ser181) interacts with substrate. Residues Arg271, 281 to 284 (FQMN), Arg340, Ala344, and 367 to 371 (EGSAN) contribute to the FAD site. Glu367 functions as the Proton acceptor in the catalytic mechanism. Arg385 provides a ligand contact to substrate.

It belongs to the acyl-CoA dehydrogenase family. As to quaternary structure, homotetramer. FAD serves as cofactor.

The enzyme catalyses glutaryl-CoA + A = (2E)-glutaconyl-CoA + AH2. It functions in the pathway aromatic compound metabolism; benzoyl-CoA degradation. Its activity is regulated as follows. Inhibited by glutaconyl-CoA. In terms of biological role, catalyzes the dehydrogenation of Glutaryl-CoA to glutaconyl-CoA. This is Glutaryl-CoA dehydrogenase (Acd) from Desulfococcus multivorans.